The sequence spans 319 residues: L-lactate dehydrogenase 2 (319 aa).

Residues Val-16, Asp-37, Lys-42, Tyr-68, and 82 to 83 (GA) each bind NAD(+). Gln-85 and Arg-91 together coordinate substrate. Residues Ser-104, 121-123 (AAN), and Ser-146 contribute to the NAD(+) site. A substrate-binding site is contributed by 123–126 (NPVD). Residue 151 to 154 (DSAR) coordinates substrate. The active-site Proton acceptor is the His-178. Position 222 is a phosphotyrosine (Tyr-222). Thr-231 contacts substrate.

The protein belongs to the LDH/MDH superfamily. LDH family. As to quaternary structure, homotetramer.

It is found in the cytoplasm. The catalysed reaction is (S)-lactate + NAD(+) = pyruvate + NADH + H(+). It participates in fermentation; pyruvate fermentation to lactate; (S)-lactate from pyruvate: step 1/1. Catalyzes the conversion of lactate to pyruvate (Potential). Contributes to S.aureus growth during nitrosative stress in both aerobically and anaerobically cultured cells, despite playing a secondary role in this resistance mechanism. This is L-lactate dehydrogenase 2 from Staphylococcus aureus (strain Mu3 / ATCC 700698).